Reading from the N-terminus, the 912-residue chain is Probable dipeptidyl-aminopeptidase B (912 aa).

The segment covering 1–25 (MAAEKGESSDEERKPLTRDSMEYRD) has biased composition (basic and acidic residues). 2 disordered regions span residues 1–31 (MAAE…NSLH) and 49–70 (GSTH…SDDG). At 1–92 (MAAEKGESSD…GGKPVQKKVK (92 aa)) the chain is on the cytoplasmic side. Residues 93-113 (IVLGFLLFLCLSGWSLSFVLF) form a helical; Signal-anchor for type II membrane protein membrane-spanning segment. Over 114 to 912 (LFGGHESSKT…RAAIWVGLSI (799 aa)) the chain is Vacuolar. 5 N-linked (GlcNAc...) asparagine glycosylation sites follow: Asn-130, Asn-210, Asn-346, Asn-569, and Asn-656. The Charge relay system role is filled by Ser-751. Asn-810 is a glycosylation site (N-linked (GlcNAc...) asparagine). Active-site charge relay system residues include Asp-828 and His-861. An N-linked (GlcNAc...) asparagine glycan is attached at Asn-897.

Belongs to the peptidase S9B family.

It is found in the vacuole membrane. It carries out the reaction Release of an N-terminal dipeptide, Xaa-Yaa-|-Zaa-, from a polypeptide, preferentially when Yaa is Pro, provided Zaa is neither Pro nor hydroxyproline.. Type IV dipeptidyl-peptidase which removes N-terminal dipeptides sequentially from polypeptides having unsubstituted N-termini provided that the penultimate residue is proline. The protein is Probable dipeptidyl-aminopeptidase B (DAPB) of Paracoccidioides lutzii (strain ATCC MYA-826 / Pb01) (Paracoccidioides brasiliensis).